We begin with the raw amino-acid sequence, 181 residues long: Ribulose bisphosphate carboxylase small subunit, chloroplastic 1 (181 aa).

The N-terminal 57 residues, 1–57 (MASSIVSSAAVATRSNVAQASMVAPFTGLKSAASFPVTKKNNNVDITSLASNGGRVR), are a transit peptide targeting the chloroplast.

It belongs to the RuBisCO small chain family. Heterohexadecamer of 8 large and 8 small subunits.

It localises to the plastid. The protein localises to the chloroplast. Functionally, ruBisCO catalyzes two reactions: the carboxylation of D-ribulose 1,5-bisphosphate, the primary event in carbon dioxide fixation, as well as the oxidative fragmentation of the pentose substrate. Both reactions occur simultaneously and in competition at the same active site. Although the small subunit is not catalytic it is essential for maximal activity. In Solanum tuberosum (Potato), this protein is Ribulose bisphosphate carboxylase small subunit, chloroplastic 1.